The chain runs to 259 residues: Expansin-B6 (259 aa).

An N-terminal signal peptide occupies residues 1–24 (MASSSHRYFALLALFAVSLKFCYC). The N-linked (GlcNAc...) asparagine glycan is linked to N26. The region spanning 52–160 (GGACGFAVAN…IRVECLYRRT (109 aa)) is the Expansin-like EG45 domain. 3 disulfides stabilise this stretch: C55–C82, C85–C155, and C90–C96. An Expansin-like CBD domain is found at 173-254 (YYISFVVEYE…NWKPNETYRS (82 aa)). N-linked (GlcNAc...) asparagine glycosylation occurs at N249.

This sequence belongs to the expansin family. Expansin B subfamily.

It is found in the secreted. It localises to the cell wall. Its subcellular location is the membrane. Functionally, may cause loosening and extension of plant cell walls by disrupting non-covalent bonding between cellulose microfibrils and matrix glucans. The chain is Expansin-B6 from Arabidopsis thaliana (Mouse-ear cress).